A 462-amino-acid polypeptide reads, in one-letter code: A-type ATP synthase subunit B (462 aa).

The protein belongs to the ATPase alpha/beta chains family. In terms of assembly, has multiple subunits with at least A(3), B(3), C, D, E, F, H, I and proteolipid K(x).

The protein localises to the cell membrane. Its function is as follows. Component of the A-type ATP synthase that produces ATP from ADP in the presence of a proton gradient across the membrane. The B chain is a regulatory subunit. The chain is A-type ATP synthase subunit B from Pyrococcus abyssi (strain GE5 / Orsay).